Here is a 200-residue protein sequence, read N- to C-terminus: MTKQEKAENQEKPTEETVEETPKKETPFEPVMEADEVEETTEAQAPVEEADDKLAELQKKYDAMEDSFLRSQAEIKNIQMRNQKEQANLLKYDGQSLAKDVLPVLDNLERALAAEATDESAESLKKGVQMTYDHMKHALEDHGVKEIEAQGQAFDPTIHQAVQTVAVDGDQKADTVVQVFQKGYYLKDRVLRPAMVVVAQ.

A compositionally biased stretch (basic and acidic residues) spans 1-27 (MTKQEKAENQEKPTEETVEETPKKETP). The tract at residues 1 to 50 (MTKQEKAENQEKPTEETVEETPKKETPFEPVMEADEVEETTEAQAPVEEA) is disordered. Over residues 32-41 (MEADEVEETT) the composition is skewed to acidic residues.

Belongs to the GrpE family. As to quaternary structure, homodimer.

The protein resides in the cytoplasm. In terms of biological role, participates actively in the response to hyperosmotic and heat shock by preventing the aggregation of stress-denatured proteins, in association with DnaK and GrpE. It is the nucleotide exchange factor for DnaK and may function as a thermosensor. Unfolded proteins bind initially to DnaJ; upon interaction with the DnaJ-bound protein, DnaK hydrolyzes its bound ATP, resulting in the formation of a stable complex. GrpE releases ADP from DnaK; ATP binding to DnaK triggers the release of the substrate protein, thus completing the reaction cycle. Several rounds of ATP-dependent interactions between DnaJ, DnaK and GrpE are required for fully efficient folding. The polypeptide is Protein GrpE (Latilactobacillus sakei subsp. sakei (strain 23K) (Lactobacillus sakei subsp. sakei)).